Reading from the N-terminus, the 99-residue chain is UPF0122 protein UU142 (99 aa).

This sequence belongs to the UPF0122 family.

Its function is as follows. Might take part in the signal recognition particle (SRP) pathway. This is inferred from the conservation of its genetic proximity to ftsY/ffh. May be a regulatory protein. This Ureaplasma parvum serovar 3 (strain ATCC 700970) protein is UPF0122 protein UU142.